Reading from the N-terminus, the 836-residue chain is TATA box-binding protein-associated factor RNA polymerase I subunit C (836 aa).

Disordered stretches follow at residues 662-683 (GDLS…QQDE) and 703-836 (HRGE…RMGF). The segment covering 738–754 (DASSAPRSQDLSTSEAR) has biased composition (polar residues). The segment covering 780 to 796 (RQTLRDHTDKLPLKRDT) has biased composition (basic and acidic residues). Position 802 is a phosphothreonine (Thr-802). Positions 803-828 (PPSQASSLQTMSFRQQTPVHSGSQPP) are enriched in polar residues.

Component of the transcription factor SL1/TIF-IB complex, composed of TBP and at least TAF1A, TAF1B, TAF1C and TAF1D. In the complex interacts directly with TBP, TAF1A and TAF1B. Interaction of the SL1/TIF-IB subunits with TBP excludes interaction of TBP with the transcription factor IID (TFIID) subunits. Interacts with MYC and RRN3. Interacts with p53/TP53; the interaction prevents the association of SL1/TIF-IB with UBTF and represses RNA polymerase I transcription. Part of Pol I pre-initiation complex (PIC), in which Pol I core assembles with RRN3 and promoter-bound UTBF and SL1/TIF-IB complex.

Its subcellular location is the nucleus. It is found in the nucleolus. Functionally, component of the transcription factor SL1/TIF-IB complex, which is involved in the assembly of the PIC (pre-initiation complex) during RNA polymerase I-dependent transcription. The rate of PIC formation probably is primarily dependent on the rate of association of SL1/TIF-IB with the rDNA promoter. SL1/TIF-IB is involved in stabilization of nucleolar transcription factor 1/UBTF on rDNA. Formation of SL1/TIF-IB excludes the association of TBP with TFIID subunits. Recruits RNA polymerase I to the rRNA gene promoter via interaction with RRN3. The polypeptide is TATA box-binding protein-associated factor RNA polymerase I subunit C (Taf1c) (Mus musculus (Mouse)).